We begin with the raw amino-acid sequence, 330 residues long: Thiosulfate transporter TsuA (330 aa).

The Periplasmic segment spans residues 1-2 (MI). The chain crosses the membrane as a helical span at residues 3-18 (WTGLLVGFLFGIVLQR). Topologically, residues 19 to 36 (GRICFNSAFRDVLLFKDN) are cytoplasmic. Residues 37 to 59 (YLFKLAVFTLALEMILFVLLSQV) form a helical membrane-spanning segment. The Periplasmic segment spans residues 60 to 70 (GLMQMNPKPLN). The helical transmembrane segment at 71-87 (LVGNIIGGFVFGLGMVL) threads the bilayer. Residues 88–102 (AGGCASGVTYRVGEG) lie on the Cytoplasmic side of the membrane. Residues 103 to 121 (LTTAWFAALFYGLGAYATK) traverse the membrane as a helical segment. Residues 122–162 (SGAFSWWLSWVGQFKSPLSVEESAYYVKGAGPTISSVLGLN) are Periplasmic-facing. The chain crosses the membrane as a helical span at residues 163–180 (PWIPALVIAALFILWAFG). Residues 181-189 (TKTTSRETK) are Cytoplasmic-facing. Residues 190 to 211 (FNWKIASVCLALVAGLGFITST) traverse the membrane as a helical segment. Over 212-239 (LSGRKYGLGITGGWINLFQGFLTNSPLN) the chain is Periplasmic. Residues 240-258 (WEGLEIVGIILGAGVAAAV) traverse the membrane as a helical segment. Over 259–269 (AGEFKLRMPKN) the chain is Cytoplasmic. Residues 270-289 (PVTYLQVGIGGLLMGIGAVT) traverse the membrane as a helical segment. The Periplasmic segment spans residues 290-306 (AGGCNIGHFLTGVPQLA). A helical transmembrane segment spans residues 307–326 (LSSWLASIFFILGNWTMAWI). Topologically, residues 327-330 (LFRR) are cytoplasmic.

The protein belongs to the TsuA/YedE (TC 9.B.102) family.

The protein localises to the cell inner membrane. It catalyses the reaction thiosulfate(in) = thiosulfate(out). Functionally, mediates thiosulfate uptake. This is Thiosulfate transporter TsuA from Spirochaeta thermophila (strain ATCC 700085 / DSM 6578 / Z-1203).